The sequence spans 318 residues: Probable plastid-lipid-associated protein 1, chloroplastic (318 aa).

A chloroplast-targeting transit peptide spans 1–55 (MATVPLFTQFPCKTLNPSSSNTKHQSKSPILLPINSINRRSEIGVSVHRPDFKIR). The residue at position 57 (Thr-57) is a Phosphothreonine.

Belongs to the PAP/fibrillin family. As to quaternary structure, interacts (via N-terminus) with ABI2. As to expression, expressed in flower buds. Detected in tapetal cells, endothecium and connective in anthers and in subepidermal cells in filaments.

It is found in the plastid. The protein resides in the chloroplast. It localises to the plastoglobule. The protein localises to the chloroplast thylakoid. In terms of biological role, probably involved in light/cold stress-related jasmonate (JA) biosynthesis. Contributes to the protection of photosystem II (PSII) against light stress. The sequence is that of Probable plastid-lipid-associated protein 1, chloroplastic (PAP1) from Arabidopsis thaliana (Mouse-ear cress).